The chain runs to 515 residues: MTTLSAKTLNLIPGQLTLAQLRAIHQQPVSLTLDSSANQQIDDSVACVERILAENRTAYGINTGFGLLASTRIASEDLENLQRSLVLSHAAGVGQPISDDLVRLIMVLKVNSLSRGFSGIRRVVIDALIALINAEVYPHIPLKGSVGASGDLAPLAHMSLVLLGEGKARHKGEWLNAVDALAVAGLKPLTLAAKEGLALLNGTQVSTAYALRGLFEGEDLFAAALTCGSLTVEAVLGSRSPFDARIHAARGQRGQIDAAACYRELLGESSGVSESHRNCDKVQDPYSLRCQPQVMGACLTQLRQAAEVLEVESNAVSDNPLVFAAENDVISGGNFHAEPVAMAADNLALAIAEIGSLSERRISLMMDKHMSQLPPFLVANGGVNSGFMIAQVTAAALASENKALAHPHSVDSLPTSANQEDHVSMAPAAGKRLWEMAENVRGILAVEWLAACQGLDLREGLKTSAKLEQARSLLRSKVPFYEKDRFFAPDIEAASQLLSSTCLNPLVPARLLPSL.

The 5-imidazolinone (Ala-Gly) cross-link spans 148–150 (ASG). S149 is subject to 2,3-didehydroalanine (Ser).

It belongs to the PAL/histidase family. Contains an active site 4-methylidene-imidazol-5-one (MIO), which is formed autocatalytically by cyclization and dehydration of residues Ala-Ser-Gly.

It is found in the cytoplasm. It carries out the reaction L-histidine = trans-urocanate + NH4(+). It functions in the pathway amino-acid degradation; L-histidine degradation into L-glutamate; N-formimidoyl-L-glutamate from L-histidine: step 1/3. The polypeptide is Histidine ammonia-lyase (Pseudomonas syringae pv. tomato (strain ATCC BAA-871 / DC3000)).